Here is a 94-residue protein sequence, read N- to C-terminus: Cell division protein FtsB (94 aa).

The Cytoplasmic portion of the chain corresponds to 1-3 (MRW). The chain crosses the membrane as a helical span at residues 4 to 21 (LTVGLLAAIGLLQYPLWV). Over 22–94 (GKGGWLKVWE…VQIPEKVPGK (73 aa)) the chain is Periplasmic. The stretch at 31–73 (EYDRQLQQQKEVTRKLEIRNAGLDAEVRDLKQGYDAIEERARF) forms a coiled coil.

Belongs to the FtsB family. Part of a complex composed of FtsB, FtsL and FtsQ.

The protein localises to the cell inner membrane. Its function is as follows. Essential cell division protein. May link together the upstream cell division proteins, which are predominantly cytoplasmic, with the downstream cell division proteins, which are predominantly periplasmic. The sequence is that of Cell division protein FtsB from Dechloromonas aromatica (strain RCB).